The primary structure comprises 551 residues: L-lactate permease (551 aa).

12 consecutive transmembrane segments (helical) span residues 13-33, 37-57, 69-89, 131-151, 159-179, 194-214, 244-264, 306-326, 366-386, 405-425, 438-458, and 530-550; these read NIWLSSLIASLPILFFFFALI, LKGYVAASWTVVIALAVALLF, VVYGFFYGLWPIAWIIIAAVF, GAAGFGAPVAITAALLVGLGF, LCLIVNTAPVAFGAMGIPILV, MVGRQLPFLTIIVLFWIMAIM, FIGPELPDIISSLVSLVCLTL, FLFLTATVTLWSVPPFKALFA, FDWFSATGTAILFAALLSIVW, LALPIYSIGMVLAFAFISNYS, TGSAFTFFSPFLGWLGVFLTG, and IFTCMVGVITTLQAYVLTWMI.

It belongs to the lactate permease family.

The protein resides in the cell inner membrane. The enzyme catalyses (S)-lactate(in) + H(+)(in) = (S)-lactate(out) + H(+)(out). The catalysed reaction is (R)-lactate(in) + H(+)(in) = (R)-lactate(out) + H(+)(out). It catalyses the reaction glycolate(in) + H(+)(in) = glycolate(out) + H(+)(out). Uptake of L-lactate across the membrane. Can also transport D-lactate and glycolate. Seems to be driven by a proton motive force. In Salmonella typhimurium (strain LT2 / SGSC1412 / ATCC 700720), this protein is L-lactate permease (lldP).